Reading from the N-terminus, the 65-residue chain is Large ribosomal subunit protein bL35 (65 aa).

The tract at residues 1 to 28 is disordered; sequence MPKIKTNRGAAKRFRKTGSGKIRRNKAF. Residues 10–26 are compositionally biased toward basic residues; it reads AAKRFRKTGSGKIRRNK.

The protein belongs to the bacterial ribosomal protein bL35 family.

This Syntrophotalea carbinolica (strain DSM 2380 / NBRC 103641 / GraBd1) (Pelobacter carbinolicus) protein is Large ribosomal subunit protein bL35.